The chain runs to 217 residues: Probable GTP-binding protein EngB (217 aa).

The EngB-type G domain maps to 32–205 (GTPQIAFAGR…RKIVYSLIET (174 aa)). Residues 40 to 47 (GRSNAGKS), 67 to 71 (GKTKL), 85 to 88 (DLPG), 152 to 155 (TKID), and 184 to 186 (VSN) contribute to the GTP site. S47 and T69 together coordinate Mg(2+).

It belongs to the TRAFAC class TrmE-Era-EngA-EngB-Septin-like GTPase superfamily. EngB GTPase family. Requires Mg(2+) as cofactor.

Its function is as follows. Necessary for normal cell division and for the maintenance of normal septation. The polypeptide is Probable GTP-binding protein EngB (Leptospira interrogans serogroup Icterohaemorrhagiae serovar copenhageni (strain Fiocruz L1-130)).